A 525-amino-acid polypeptide reads, in one-letter code: Signal recognition particle protein (525 aa).

Residues 107-114 (GLQGSGKT), 196-200 (DTAGR), and 254-257 (TKLD) contribute to the GTP site. Positions 437–525 (GMGIPGIGRK…LSKLKFPGKK (89 aa)) are disordered. Basic residues predominate over residues 447–467 (SATRKSKGAKGKSGKKSKKGT). Positions 480–497 (GVPGMPGLAGLPGGLPDL) are enriched in low complexity.

Belongs to the GTP-binding SRP family. SRP54 subfamily. As to quaternary structure, part of the signal recognition particle protein translocation system, which is composed of SRP and FtsY.

It localises to the cytoplasm. The enzyme catalyses GTP + H2O = GDP + phosphate + H(+). In terms of biological role, involved in targeting and insertion of nascent membrane proteins into the cytoplasmic membrane. Binds to the hydrophobic signal sequence of the ribosome-nascent chain (RNC) as it emerges from the ribosomes. The SRP-RNC complex is then targeted to the cytoplasmic membrane where it interacts with the SRP receptor FtsY. This chain is Signal recognition particle protein, found in Mycobacterium bovis (strain ATCC BAA-935 / AF2122/97).